The primary structure comprises 707 residues: UvrABC system protein C (707 aa).

One can recognise a GIY-YIG domain in the interval 14–94; the sequence is AEPGCYLMKD…IKKHRPRFNV (81 aa). The region spanning 206-241 is the UVR domain; that stretch reads GELVERLRGRMAGAAEGLRFEEAARLRDQLQAVERS. The tract at residues 655–707 is disordered; sequence DAPPIAADEPSGAPAGAPGGGPAEASPEAVAAATEAEIDAALADEDASPEPAA. 2 stretches are compositionally biased toward low complexity: residues 660–670 and 677–689; these read AADEPSGAPAG and AEAS…AATE. Acidic residues predominate over residues 690–707; it reads AEIDAALADEDASPEPAA.

Belongs to the UvrC family. Interacts with UvrB in an incision complex.

Its subcellular location is the cytoplasm. In terms of biological role, the UvrABC repair system catalyzes the recognition and processing of DNA lesions. UvrC both incises the 5' and 3' sides of the lesion. The N-terminal half is responsible for the 3' incision and the C-terminal half is responsible for the 5' incision. This Anaeromyxobacter dehalogenans (strain 2CP-1 / ATCC BAA-258) protein is UvrABC system protein C.